Reading from the N-terminus, the 647-residue chain is Shugoshin-2 (647 aa).

Residue Ser-7 is modified to Phosphoserine. Coiled coils occupy residues 28–87 and 125–145; these read SKAQ…FHEE and DEES…HDVS. The disordered stretch occupies residues 171-295; that stretch reads REANVFSDTQ…DTVIQSTPTK (125 aa). Low complexity predominate over residues 200-210; it reads NLSNSKPVNNN. Residue Ser-240 is modified to Phosphoserine. Polar residues-rich tracts occupy residues 242–253 and 282–293; these read KSLSNKINNQAA and RIQSDTVIQSTP. Residue Thr-292 is modified to Phosphothreonine. 2 positions are modified to phosphoserine: Ser-332 and Ser-335. Polar residues-rich tracts occupy residues 375-396 and 462-478; these read SLTS…NMTV and EPPS…NNSP. Disordered stretches follow at residues 375-416, 453-486, 522-579, and 593-647; these read SLTS…DSSV, RNPP…SLQG, TNLK…ERKK, and RNFD…TLNL. Basic and acidic residues-rich tracts occupy residues 528-541 and 593-602; these read NEND…SRRE and RNFDLPSDHV. Positions 621-647 are enriched in polar residues; sequence KTETANITSEAPTTSEVTLENSETLNL.

This sequence belongs to the shugoshin family.

It localises to the chromosome. Its subcellular location is the centromere. In terms of biological role, involved in chromosome cohesion during mitosis and meiosis by preventing premature dissociation of cohesin complex from centromeres after prophase, when most of cohesin complex dissociates from chromosomes arms. Required for faithful mitotic chromosome segregation and proper kinetochore orientation during meiosis I. In contrast to sgo1, it is dispensable for centromeric protection of rec8 during meiosis I as well as protection of rad21 during mitosis. Required to sense the lack of tension at centromeres during mitosis. The chain is Shugoshin-2 (sgo2) from Schizosaccharomyces pombe (strain 972 / ATCC 24843) (Fission yeast).